The following is a 299-amino-acid chain: Type II restriction enzyme BglI (299 aa).

Asp116, Asp142, and Ile143 together coordinate Mg(2+).

As to quaternary structure, homodimer. Requires Mg(2+) as cofactor.

The enzyme catalyses Endonucleolytic cleavage of DNA to give specific double-stranded fragments with terminal 5'-phosphates.. A P subtype restriction enzyme that recognizes the double-stranded sequence 5'-GCCNNNNNGGC-3' and cleaves before N-8. The sequence is that of Type II restriction enzyme BglI (bglIR) from Bacillus subtilis.